Reading from the N-terminus, the 216-residue chain is MAFIIAVDGPAASGKGTVASRLAKLYDYPMLDTGLLYRAVGVRLLDADGDPDDPVAAEVSARELDISELERPEVRTRAAGEAASRVAVHPGVRAALFDLQRDFALREPGCVIDGRDIGTVIAPEAPAKLYVSASPEVRADRRWKQLLGQGESVTLDEVLADIRKRDERDGGRASAPMTQAPDAVLLDTSEMTIEQAFDAARRIVETARARWGNPKG.

9-17 (GPAASGKGT) is a binding site for ATP.

It belongs to the cytidylate kinase family. Type 1 subfamily.

The protein resides in the cytoplasm. It catalyses the reaction CMP + ATP = CDP + ADP. The catalysed reaction is dCMP + ATP = dCDP + ADP. In Caulobacter sp. (strain K31), this protein is Cytidylate kinase.